The following is a 236-amino-acid chain: Methylosome subunit pICln (236 aa).

Serine 2 is modified (N-acetylserine). 6 positions are modified to phosphoserine: serine 95, serine 143, serine 192, serine 194, serine 197, and serine 209. The segment at 134–158 is disordered; sequence LHPDPEDEDSDDYDGEEYDVEAHEQ. The segment covering 138-152 has biased composition (acidic residues); that stretch reads PEDEDSDDYDGEEYD. Threonine 222 bears the Phosphothreonine mark.

Belongs to the pICln (TC 1.A.47) family. In terms of assembly, component of the methylosome, a 20S complex containing at least PRMT5/SKB1, WDR77/MEP50 and CLNS1A/pICln. May mediate SNRPD1 and SNRPD3 methylation. Forms a 6S pICln-Sm complex composed of CLNS1A/pICln, SNRPD1, SNRPD2, SNRPE, SNRPF and SNRPG; ring-like structure where CLNS1A/pICln mimics additional Sm proteins and which is unable to assemble into the core snRNP. Interacts with LSM10 and LSM11. In terms of tissue distribution, expressed in most tissues.

The protein resides in the cytoplasm. Its subcellular location is the cytosol. It localises to the nucleus. It is found in the cytoskeleton. Functionally, involved in both the assembly of spliceosomal snRNPs and the methylation of Sm proteins. Chaperone that regulates the assembly of spliceosomal U1, U2, U4 and U5 small nuclear ribonucleoproteins (snRNPs), the building blocks of the spliceosome, and thereby plays an important role in the splicing of cellular pre-mRNAs. Most spliceosomal snRNPs contain a common set of Sm proteins SNRPB, SNRPD1, SNRPD2, SNRPD3, SNRPE, SNRPF and SNRPG that assemble in a heptameric protein ring on the Sm site of the small nuclear RNA to form the core snRNP (Sm core). In the cytosol, the Sm proteins SNRPD1, SNRPD2, SNRPE, SNRPF and SNRPG are trapped in an inactive 6S pICln-Sm complex by the chaperone CLNS1A that controls the assembly of the core snRNP. Dissociation by the SMN complex of CLNS1A from the trapped Sm proteins and their transfer to an SMN-Sm complex triggers the assembly of core snRNPs and their transport to the nucleus. In Rattus norvegicus (Rat), this protein is Methylosome subunit pICln (Clns1a).